The following is a 222-amino-acid chain: UPF0316 protein Mboo_0791 (222 aa).

3 consecutive transmembrane segments (helical) span residues Phe25–Ala45, Leu67–Leu87, and Ile93–Ile113.

The protein belongs to the UPF0316 family.

Its subcellular location is the cell membrane. This Methanoregula boonei (strain DSM 21154 / JCM 14090 / 6A8) protein is UPF0316 protein Mboo_0791.